Consider the following 278-residue polypeptide: HTH-type transcriptional activator RhaS (278 aa).

The region spanning Asn-174–Gly-272 is the HTH araC/xylS-type domain. DNA-binding regions (H-T-H motif) lie at residues Asp-191 to Thr-212 and Val-239 to Phe-262.

Binds DNA as a dimer.

Its subcellular location is the cytoplasm. Activates expression of the rhaBAD and rhaT operons. This is HTH-type transcriptional activator RhaS from Shigella boydii serotype 18 (strain CDC 3083-94 / BS512).